A 246-amino-acid chain; its full sequence is Ribosomal RNA small subunit methyltransferase G (246 aa).

Residues G81, F86, 137 to 138, and R156 each bind S-adenosyl-L-methionine; that span reads AE. Positions 221-246 are disordered; it reads LVLIRKERPTPKAYPRRAGVPAKSPL.

It belongs to the methyltransferase superfamily. RNA methyltransferase RsmG family.

It is found in the cytoplasm. Functionally, specifically methylates the N7 position of a guanine in 16S rRNA. The protein is Ribosomal RNA small subunit methyltransferase G of Symbiobacterium thermophilum (strain DSM 24528 / JCM 14929 / IAM 14863 / T).